A 347-amino-acid polypeptide reads, in one-letter code: Phenylalanine--tRNA ligase alpha subunit (347 aa).

Glu265 serves as a coordination point for Mg(2+).

This sequence belongs to the class-II aminoacyl-tRNA synthetase family. Phe-tRNA synthetase alpha subunit type 1 subfamily. In terms of assembly, tetramer of two alpha and two beta subunits. It depends on Mg(2+) as a cofactor.

The protein resides in the cytoplasm. It carries out the reaction tRNA(Phe) + L-phenylalanine + ATP = L-phenylalanyl-tRNA(Phe) + AMP + diphosphate + H(+). The protein is Phenylalanine--tRNA ligase alpha subunit of Wolbachia pipientis wMel.